Reading from the N-terminus, the 274-residue chain is MQQLQNIIETAFERRAEITPANADTITREAVNQVIALLDSGALRVAEKIDGQWVTHQWLKKAVLLSFRINDNQVIEGAESRYFDKVPMKFANYDEARFQKEGFRVVPPAAVRQGAFIARNTVLMPSYVNIGAYVDEGTMVDTWATVGSCAQIGKNVHLSGGVGIGGVLEPLQANPTIIEDNCFIGARSEIVEGVIVEEGSVISMGVYIGQSTKIYDRETGEVHYGRVPAGSVVVSGNLPSKDGKYSLYCAVIVKKVDAKTRGKVGINELLRTID.

Arg-104 and Asp-141 together coordinate substrate.

The protein belongs to the transferase hexapeptide repeat family. Homotrimer.

The protein localises to the cytoplasm. It catalyses the reaction (S)-2,3,4,5-tetrahydrodipicolinate + succinyl-CoA + H2O = (S)-2-succinylamino-6-oxoheptanedioate + CoA. The protein operates within amino-acid biosynthesis; L-lysine biosynthesis via DAP pathway; LL-2,6-diaminopimelate from (S)-tetrahydrodipicolinate (succinylase route): step 1/3. In Shigella dysenteriae serotype 1 (strain Sd197), this protein is 2,3,4,5-tetrahydropyridine-2,6-dicarboxylate N-succinyltransferase.